A 306-amino-acid polypeptide reads, in one-letter code: Recombination-associated protein RdgC (306 aa).

The protein belongs to the RdgC family.

The protein resides in the cytoplasm. It is found in the nucleoid. May be involved in recombination. In Pseudomonas paraeruginosa (strain DSM 24068 / PA7) (Pseudomonas aeruginosa (strain PA7)), this protein is Recombination-associated protein RdgC.